The sequence spans 444 residues: Phosphoglucosamine mutase (444 aa).

Serine 104 functions as the Phosphoserine intermediate in the catalytic mechanism. Positions 104, 243, 245, and 247 each coordinate Mg(2+). Serine 104 is modified (phosphoserine).

Belongs to the phosphohexose mutase family. It depends on Mg(2+) as a cofactor. Post-translationally, activated by phosphorylation.

It carries out the reaction alpha-D-glucosamine 1-phosphate = D-glucosamine 6-phosphate. Its function is as follows. Catalyzes the conversion of glucosamine-6-phosphate to glucosamine-1-phosphate. The protein is Phosphoglucosamine mutase of Neisseria gonorrhoeae (strain ATCC 700825 / FA 1090).